The chain runs to 160 residues: Phosphopantetheine adenylyltransferase (160 aa).

Thr11 is a substrate binding site. ATP contacts are provided by residues 11 to 12 (TF) and His19. 3 residues coordinate substrate: Lys43, Thr75, and Arg89. Residues 90-92 (GLR), Glu100, and 125-131 (YSFLSSS) contribute to the ATP site.

This sequence belongs to the bacterial CoaD family. As to quaternary structure, homohexamer. Mg(2+) serves as cofactor.

Its subcellular location is the cytoplasm. The enzyme catalyses (R)-4'-phosphopantetheine + ATP + H(+) = 3'-dephospho-CoA + diphosphate. It functions in the pathway cofactor biosynthesis; coenzyme A biosynthesis; CoA from (R)-pantothenate: step 4/5. In terms of biological role, reversibly transfers an adenylyl group from ATP to 4'-phosphopantetheine, yielding dephospho-CoA (dPCoA) and pyrophosphate. The protein is Phosphopantetheine adenylyltransferase of Listeria monocytogenes serovar 1/2a (strain ATCC BAA-679 / EGD-e).